We begin with the raw amino-acid sequence, 102 residues long: Flagellar hook-basal body complex protein FliE 1 (102 aa).

The protein belongs to the FliE family.

The protein resides in the bacterial flagellum basal body. This is Flagellar hook-basal body complex protein FliE 1 (fliE1) from Bradyrhizobium diazoefficiens (strain JCM 10833 / BCRC 13528 / IAM 13628 / NBRC 14792 / USDA 110).